The primary structure comprises 308 residues: tRNA dimethylallyltransferase (308 aa).

Residue 14-21 coordinates ATP; it reads GPTASGKS. Substrate is bound at residue 16–21; it reads TASGKS. Residues 39–42 are interaction with substrate tRNA; that stretch reads DSMQ.

This sequence belongs to the IPP transferase family. In terms of assembly, monomer. Requires Mg(2+) as cofactor.

The catalysed reaction is adenosine(37) in tRNA + dimethylallyl diphosphate = N(6)-dimethylallyladenosine(37) in tRNA + diphosphate. In terms of biological role, catalyzes the transfer of a dimethylallyl group onto the adenine at position 37 in tRNAs that read codons beginning with uridine, leading to the formation of N6-(dimethylallyl)adenosine (i(6)A). This chain is tRNA dimethylallyltransferase, found in Bradyrhizobium sp. (strain ORS 278).